We begin with the raw amino-acid sequence, 358 residues long: Probable BOI-related E3 ubiquitin-protein ligase 2 (358 aa).

A coiled-coil region spans residues 171–234; that stretch reads KYEIEEKRKR…NQIWRDLAQT (64 aa). Positions 214–250 are WRD domain; the sequence is LEERVKSLSIENQIWRDLAQTNEATANHLRTNLEHVL. An RING-type zinc finger spans residues 310–345; sequence CRNCGEEESCVLLLPCRHLCLCGVCGSSVHTCPICT.

Interacts with the DELLA proteins GAI, RGA, RGL1, RGL2 and RGL3.

The enzyme catalyses S-ubiquitinyl-[E2 ubiquitin-conjugating enzyme]-L-cysteine + [acceptor protein]-L-lysine = [E2 ubiquitin-conjugating enzyme]-L-cysteine + N(6)-ubiquitinyl-[acceptor protein]-L-lysine.. It participates in protein degradation; proteasomal ubiquitin-dependent pathway. In terms of biological role, probable E3 ubiquitin-protein ligase. Has no effect on the stability of the DELLA proteins. This is Probable BOI-related E3 ubiquitin-protein ligase 2 (BRG2) from Arabidopsis thaliana (Mouse-ear cress).